A 184-amino-acid chain; its full sequence is Ribosome maturation factor RimM (184 aa).

The region spanning 93-165 is the PRC barrel domain; that stretch reads DEGWYEHELV…YILITPPSGL (73 aa).

This sequence belongs to the RimM family. As to quaternary structure, binds ribosomal protein uS19.

It localises to the cytoplasm. An accessory protein needed during the final step in the assembly of 30S ribosomal subunit, possibly for assembly of the head region. Essential for efficient processing of 16S rRNA. May be needed both before and after RbfA during the maturation of 16S rRNA. It has affinity for free ribosomal 30S subunits but not for 70S ribosomes. The protein is Ribosome maturation factor RimM of Paenarthrobacter aurescens (strain TC1).